The sequence spans 410 residues: Sporulation killing factor maturation protein SkfB (410 aa).

The region spanning 103-314 is the Radical SAM core domain; that stretch reads SYLPISCTLQ…LREARHKWGD (212 aa). The [4Fe-4S] cluster site is built by Cys117, Cys121, Cys124, Cys380, Cys385, and Cys387.

This sequence belongs to the radical SAM superfamily. The cofactor is [4Fe-4S] cluster.

It localises to the cytoplasm. Catalyzes the formation of the thioether bond required for production of the sporulation killing factor (SKF) from SkfA. Forms the cysteine-methionine thioether bond found in SKF; the acceptor amino acid can be hydrophobic, aromatic or a small hydrophilic amino acid but not a larger hydrophilic amino acid, i.e. Met=Ala, Phe, Leu, Tyr&gt;Asn, Ser&gt;&gt;Gln, Glu, Lys. The relative position of Cys and Met in the substrate cannot be inverted, in vitro the thioether bond cannot be made in the absence of the SkfA propeptide, suggesting this is the first reaction in SKF maturation. In vitro, in the absence of a second substrate, cleaves S-adenosyl-L-methionine into Met and 5'-dA. The chain is Sporulation killing factor maturation protein SkfB from Bacillus subtilis (strain 168).